A 306-amino-acid chain; its full sequence is Ribokinase (306 aa).

Substrate-binding positions include 12 to 14 (NAD), 40 to 44 (GKGAN), and E141. ATP is bound by residues N185 and 221–226 (TLGAKG). The K(+) site is built by D247 and T249. 252-253 (GD) contacts ATP. A substrate-binding site is contributed by D253. D253 serves as the catalytic Proton acceptor. Residues S283, K286, G288, and S292 each contribute to the K(+) site.

This sequence belongs to the carbohydrate kinase PfkB family. Ribokinase subfamily. Homodimer. Requires Mg(2+) as cofactor.

The protein resides in the cytoplasm. It carries out the reaction D-ribose + ATP = D-ribose 5-phosphate + ADP + H(+). Its pathway is carbohydrate metabolism; D-ribose degradation; D-ribose 5-phosphate from beta-D-ribopyranose: step 2/2. With respect to regulation, activated by a monovalent cation that binds near, but not in, the active site. The most likely occupant of the site in vivo is potassium. Ion binding induces a conformational change that may alter substrate affinity. In terms of biological role, catalyzes the phosphorylation of ribose at O-5 in a reaction requiring ATP and magnesium. The resulting D-ribose-5-phosphate can then be used either for sythesis of nucleotides, histidine, and tryptophan, or as a component of the pentose phosphate pathway. The protein is Ribokinase of Haemophilus influenzae (strain ATCC 51907 / DSM 11121 / KW20 / Rd).